The following is a 641-amino-acid chain: MYLTIITLPLFAFLTVGVIGRKLGVRGSQIITSLSIIISAILSLYGFYEIVLLNNLGPITIYLSPWMNVIGAHADWAFYFDSISITMCVVVSSISSLVHLYSIGYMQGDPHIQRFFSYLSLFTFFMLLLVTGNNYLLMFVGWEGIGVSSYLLINFWFTRIQANKASMQAMLVNRVGDLGFVLGLFGIFWLFGSSDYDTVGIIAYKLDEQYITIVTLFLLIAAIGKSAQLGLHTWLPSAMEGPTPVSALIHAATLVTAGVYLILRSSPLFELAPTSLICVCVIGSLTAIFAATTGLFQNDLKRVIAYSTCSQLGYMVFALGLSQYEVAFFHLFNHAYFKALLFLSAGSIIHALHDEQDMRKMGGLVNILPFTYTMILIGSLSLMALPFLTGYYSKDAILEVAYGQFLVTGTFTYWLGTITATITAFYSSKALILGFFGTPNGSKKIYNTIHEAPLIMSIPLFLLSICSIFIGYITNKHLSVIGIGSSGIISGGVGTLRDHYLGFDIEFISTSFGVQFYPLFASLLGISLALIVLKDPKKMHSIEKPEGLLNTVNITRWLSSKSYWFDNVYNTVLISGSLHFGGIFARDIDKGFLSLLGPQGLQQLLITISRFFAIKIDTGFIPHYASIIIIIPIFIILSIFI.

A run of 17 helical transmembrane segments spans residues 1-21 (MYLT…VIGR), 33-53 (SLSI…IVLL), 59-79 (ITIY…WAFY), 83-103 (ISIT…LYSI), 121-141 (LFTF…MFVG), 175-195 (VGDL…GSSD), 211-231 (ITIV…QLGL), 243-263 (TPVS…YLIL), 276-296 (LICV…TGLF), 303-322 (VIAY…LGLS), 367-387 (ILPF…ALPF), 405-425 (FLVT…ITAF), 453-473 (PLIM…IGYI), 476-496 (KHLS…VGTL), 512-532 (FGVQ…ALIV), 564-584 (WFDN…GGIF), and 621-641 (IPHY…SIFI).

The protein belongs to the complex I subunit 5 family.

The protein localises to the mitochondrion inner membrane. The enzyme catalyses a ubiquinone + NADH + 5 H(+)(in) = a ubiquinol + NAD(+) + 4 H(+)(out). Functionally, core subunit of the mitochondrial membrane respiratory chain NADH dehydrogenase (Complex I) that is believed to belong to the minimal assembly required for catalysis. Complex I functions in the transfer of electrons from NADH to the respiratory chain. The immediate electron acceptor for the enzyme is believed to be ubiquinone. This is NADH-ubiquinone oxidoreductase chain 5 (ND5) from Allomyces macrogynus.